The primary structure comprises 138 residues: Putative nickel-responsive regulator (138 aa).

Positions 78, 89, 91, and 97 each coordinate Ni(2+).

The protein belongs to the transcriptional regulatory CopG/NikR family. Ni(2+) is required as a cofactor.

In terms of biological role, transcriptional regulator. The sequence is that of Putative nickel-responsive regulator from Pyrococcus furiosus (strain ATCC 43587 / DSM 3638 / JCM 8422 / Vc1).